Here is a 358-residue protein sequence, read N- to C-terminus: Alpha-ketoglutarate-dependent L-arginine hydroxylase (358 aa).

Residues 1–21 form a disordered region; sequence MTESPTTHHGAAPPDSVATPV. Residues 117–135 traverse the membrane as a helical segment; that stretch reads LSFLLMLYAGLLGDVFGWA. 156–158 is an L-arginine binding site; that stretch reads LVS. The Fe cation site is built by H168 and E170. T194 lines the 2-oxoglutarate pocket. 268 to 270 provides a ligand contact to L-arginine; sequence DGD. Residue H316 participates in Fe cation binding. Positions 330 and 334 each coordinate 2-oxoglutarate. R334 serves as a coordination point for L-arginine.

Belongs to the clavaminate synthase family. Fe cation serves as cofactor.

It localises to the membrane. The catalysed reaction is L-arginine + 2-oxoglutarate + O2 = (2S,3S)-hydroxyarginine + succinate + CO2. It participates in antibiotic biosynthesis. Functionally, involved in the biosynthesis of capreomycidine, an unusual amino acid used by non-ribosomal peptide synthases (NRPS) to make the tuberactinomycin class of peptide antibiotics such as viomycin and capreomycin. Catalyzes the stereospecific hydroxylation of the C3 of (2S)-arginine to generate (3S)-hydroxy-(2S)-arginine. Usually clavaminic acid synthase-like oxygenases catalyze the formation of threo diastereomers, however VioC produces the erythro diastereomer of beta-carbon-hydroxylated L-arginine. It exerts a broad substrate specificity by accepting the analogs L-homoarginine and L-canavanine for the beta-carbon hydroxylation. The protein is Alpha-ketoglutarate-dependent L-arginine hydroxylase (vioC) of Streptomyces vinaceus.